We begin with the raw amino-acid sequence, 172 residues long: Macro domain-containing protein lp_3408 (172 aa).

The region spanning 1 to 171 (MVEIKVIHGD…VFSTALAALT (171 aa)) is the Macro domain.

The protein belongs to the MacroD-type family.

This is Macro domain-containing protein lp_3408 from Lactiplantibacillus plantarum (strain ATCC BAA-793 / NCIMB 8826 / WCFS1) (Lactobacillus plantarum).